Consider the following 371-residue polypeptide: GDP-mannose 3,5-epimerase 2 (371 aa).

Residues glycine 29 to lysine 55, aspartate 53, and aspartate 73 contribute to the NAD(+) site. Residues glycine 98 and serine 138–cysteine 140 contribute to the substrate site. NAD(+) is bound by residues tyrosine 168 and lysine 172. Tyrosine 168 acts as the Proton acceptor in catalysis. Substrate-binding positions include asparagine 197, glutamate 210–alanine 212, lysine 219, glutamine 235–arginine 237, arginine 300, and serine 350.

It belongs to the NAD(P)-dependent epimerase/dehydratase family. NAD(+) serves as cofactor.

The enzyme catalyses GDP-alpha-D-mannose = GDP-beta-L-gulose. The catalysed reaction is GDP-beta-L-gulose = GDP-beta-L-galactose. It functions in the pathway cofactor biosynthesis; L-ascorbate biosynthesis via GDP-alpha-D-mannose pathway; L-ascorbate from GDP-alpha-D-mannose: step 1/5. In terms of biological role, catalyzes a reversible epimerization of GDP-D-mannose that precedes the committed step in the biosynthesis of vitamin C (L-ascorbate), resulting in the hydrolysis of the highly energetic glycosyl-pyrophosphoryl linkage. Able to catalyze 2 distinct epimerization reactions and can release both GDP-L-galactose and GDP-L-gulose from GDP-mannose. This chain is GDP-mannose 3,5-epimerase 2 (GME-2), found in Oryza sativa subsp. japonica (Rice).